The following is a 400-amino-acid chain: Deoxyhypusine synthase-like protein (400 aa).

The tract at residues 372 to 400 (KLGKEQMPEPQSTEPVATYPCGTPIKGRK) is disordered.

This sequence belongs to the deoxyhypusine synthase family.

The sequence is that of Deoxyhypusine synthase-like protein from Cyanothece sp. (strain PCC 7425 / ATCC 29141).